We begin with the raw amino-acid sequence, 88 residues long: Putative membrane protein insertion efficiency factor (88 aa).

It belongs to the UPF0161 family.

It localises to the cell membrane. Functionally, could be involved in insertion of integral membrane proteins into the membrane. The chain is Putative membrane protein insertion efficiency factor (yrcB) from Lactococcus lactis subsp. lactis (strain IL1403) (Streptococcus lactis).